A 108-amino-acid chain; its full sequence is Iron-sulfur cluster assembly protein CyaY (108 aa).

Belongs to the frataxin family.

In terms of biological role, involved in iron-sulfur (Fe-S) cluster assembly. May act as a regulator of Fe-S biogenesis. This Pseudoalteromonas atlantica (strain T6c / ATCC BAA-1087) protein is Iron-sulfur cluster assembly protein CyaY.